The chain runs to 102 residues: Small ribosomal subunit protein uS10 (102 aa).

Belongs to the universal ribosomal protein uS10 family. Part of the 30S ribosomal subunit.

Functionally, involved in the binding of tRNA to the ribosomes. This is Small ribosomal subunit protein uS10 from Staphylococcus haemolyticus (strain JCSC1435).